The primary structure comprises 286 residues: Lipoyl synthase (286 aa).

[4Fe-4S] cluster contacts are provided by Cys-29, Cys-34, Cys-40, Cys-55, Cys-59, Cys-62, and Ser-265. Residues 41–254 form the Radical SAM core domain; it reads WGSGTATFMI…EKIAYSLGFS (214 aa).

Belongs to the radical SAM superfamily. Lipoyl synthase family. [4Fe-4S] cluster serves as cofactor.

It localises to the cytoplasm. It catalyses the reaction [[Fe-S] cluster scaffold protein carrying a second [4Fe-4S](2+) cluster] + N(6)-octanoyl-L-lysyl-[protein] + 2 oxidized [2Fe-2S]-[ferredoxin] + 2 S-adenosyl-L-methionine + 4 H(+) = [[Fe-S] cluster scaffold protein] + N(6)-[(R)-dihydrolipoyl]-L-lysyl-[protein] + 4 Fe(3+) + 2 hydrogen sulfide + 2 5'-deoxyadenosine + 2 L-methionine + 2 reduced [2Fe-2S]-[ferredoxin]. Its pathway is protein modification; protein lipoylation via endogenous pathway; protein N(6)-(lipoyl)lysine from octanoyl-[acyl-carrier-protein]: step 2/2. Functionally, catalyzes the radical-mediated insertion of two sulfur atoms into the C-6 and C-8 positions of the octanoyl moiety bound to the lipoyl domains of lipoate-dependent enzymes, thereby converting the octanoylated domains into lipoylated derivatives. The polypeptide is Lipoyl synthase (Sulfolobus acidocaldarius (strain ATCC 33909 / DSM 639 / JCM 8929 / NBRC 15157 / NCIMB 11770)).